The sequence spans 183 residues: Protein Syd (183 aa).

It belongs to the Syd family.

The protein resides in the cell inner membrane. Functionally, interacts with the SecY protein in vivo. May bind preferentially to an uncomplexed state of SecY, thus functioning either as a chelating agent for excess SecY in the cell or as a regulatory factor that negatively controls the translocase function. The sequence is that of Protein Syd from Aliivibrio fischeri (strain MJ11) (Vibrio fischeri).